A 633-amino-acid polypeptide reads, in one-letter code: 1-deoxy-D-xylulose-5-phosphate synthase (633 aa).

Residues histidine 74 and 115 to 117 contribute to the thiamine diphosphate site; that span reads GHA. Aspartate 146 is a binding site for Mg(2+). Thiamine diphosphate-binding positions include 147 to 148, asparagine 175, tyrosine 286, and glutamate 363; that span reads GA. Mg(2+) is bound at residue asparagine 175.

This sequence belongs to the transketolase family. DXPS subfamily. As to quaternary structure, homodimer. The cofactor is Mg(2+). Requires thiamine diphosphate as cofactor.

It catalyses the reaction D-glyceraldehyde 3-phosphate + pyruvate + H(+) = 1-deoxy-D-xylulose 5-phosphate + CO2. It functions in the pathway metabolic intermediate biosynthesis; 1-deoxy-D-xylulose 5-phosphate biosynthesis; 1-deoxy-D-xylulose 5-phosphate from D-glyceraldehyde 3-phosphate and pyruvate: step 1/1. In terms of biological role, catalyzes the acyloin condensation reaction between C atoms 2 and 3 of pyruvate and glyceraldehyde 3-phosphate to yield 1-deoxy-D-xylulose-5-phosphate (DXP). This is 1-deoxy-D-xylulose-5-phosphate synthase from Dehalococcoides mccartyi (strain ATCC BAA-2100 / JCM 16839 / KCTC 5957 / BAV1).